The sequence spans 92 residues: C-C motif chemokine 4 (92 aa).

The N-terminal stretch at 1–23 (MKLGVTVLSVALLVAALCPPALS) is a signal peptide. Disulfide bonds link Cys34–Cys58 and Cys35–Cys74.

It belongs to the intercrine beta (chemokine CC) family. In terms of assembly, homodimer.

It is found in the secreted. Monokine with inflammatory and chemokinetic properties. This Oryctolagus cuniculus (Rabbit) protein is C-C motif chemokine 4 (CCL4).